Here is a 237-residue protein sequence, read N- to C-terminus: Probable transcriptional regulatory protein EAT1b_0153 (237 aa).

This sequence belongs to the TACO1 family. YeeN subfamily.

Its subcellular location is the cytoplasm. The sequence is that of Probable transcriptional regulatory protein EAT1b_0153 from Exiguobacterium sp. (strain ATCC BAA-1283 / AT1b).